A 302-amino-acid polypeptide reads, in one-letter code: Plant UBX domain-containing protein 3 (302 aa).

Disordered regions lie at residues 1 to 64 and 79 to 98; these read MSSK…PKHD and VEGP…TGRL. The SEP domain occupies 113–177; the sequence is PVIHNIIFWS…NLMRRDEKCP (65 aa). The UBX domain maps to 224–301; that stretch reads ETLPSTSIQL…GLASSVVIQK (78 aa).

Interacts with CDC48A.

The sequence is that of Plant UBX domain-containing protein 3 from Arabidopsis thaliana (Mouse-ear cress).